Consider the following 83-residue polypeptide: Small ribosomal subunit protein uS17 (83 aa).

Belongs to the universal ribosomal protein uS17 family. Part of the 30S ribosomal subunit.

One of the primary rRNA binding proteins, it binds specifically to the 5'-end of 16S ribosomal RNA. The polypeptide is Small ribosomal subunit protein uS17 (Magnetococcus marinus (strain ATCC BAA-1437 / JCM 17883 / MC-1)).